Reading from the N-terminus, the 589-residue chain is Bifunctional protein TrpGD (589 aa).

A Glutamine amidotransferase type-1 domain is found at 46 to 241; it reads RVIVIDNYDS…LNIQDIQVKK (196 aa). 99-101 lines the L-glutamine pocket; sequence GPG. Cysteine 126 serves as the catalytic Nucleophile; for GATase activity. L-glutamine contacts are provided by residues glutamine 130 and 176–177; that span reads SL. Catalysis depends on for GATase activity residues histidine 215 and glutamate 217. Residues 253-589 are anthranilate phosphoribosyltransferase; that stretch reads ALKKLVEFED…MDYQKTLGNS (337 aa).

In the C-terminal section; belongs to the anthranilate phosphoribosyltransferase family. Heterotetramer consisting of two non-identical subunits: a beta subunit (TrpG) and a large alpha subunit (TrpE).

The catalysed reaction is chorismate + L-glutamine = anthranilate + pyruvate + L-glutamate + H(+). It catalyses the reaction N-(5-phospho-beta-D-ribosyl)anthranilate + diphosphate = 5-phospho-alpha-D-ribose 1-diphosphate + anthranilate. It functions in the pathway amino-acid biosynthesis; L-tryptophan biosynthesis; L-tryptophan from chorismate: step 1/5. It participates in amino-acid biosynthesis; L-tryptophan biosynthesis; L-tryptophan from chorismate: step 2/5. Functionally, part of a heterotetrameric complex that catalyzes the two-step biosynthesis of anthranilate, an intermediate in the biosynthesis of L-tryptophan. In the first step, the glutamine-binding beta subunit (TrpG) of anthranilate synthase (AS) provides the glutamine amidotransferase activity which generates ammonia as a substrate that, along with chorismate, is used in the second step, catalyzed by the large alpha subunit of AS (TrpE) to produce anthranilate. In the absence of TrpG, TrpE can synthesize anthranilate directly from chorismate and high concentrations of ammonia. In addition to synthesizing anthranilate, it also catalyzes the second step of the pathway, the transfer of the phosphoribosyl group of 5-phosphorylribose-1-pyrophosphate (PRPP) to anthranilate. This is Bifunctional protein TrpGD (trpGD) from Thermotoga maritima (strain ATCC 43589 / DSM 3109 / JCM 10099 / NBRC 100826 / MSB8).